We begin with the raw amino-acid sequence, 264 residues long: Thymidylate synthase (264 aa).

Arg21 lines the dUMP pocket. His51 provides a ligand contact to (6R)-5,10-methylene-5,6,7,8-tetrahydrofolate. Position 126–127 (126–127 (RR)) interacts with dUMP. Residue Cys146 is the Nucleophile of the active site. Residues 166 to 169 (RSAD), Asn177, and 207 to 209 (HLY) each bind dUMP. A (6R)-5,10-methylene-5,6,7,8-tetrahydrofolate-binding site is contributed by Asp169. Residue Ala263 participates in (6R)-5,10-methylene-5,6,7,8-tetrahydrofolate binding.

It belongs to the thymidylate synthase family. Bacterial-type ThyA subfamily. In terms of assembly, homodimer.

Its subcellular location is the cytoplasm. It catalyses the reaction dUMP + (6R)-5,10-methylene-5,6,7,8-tetrahydrofolate = 7,8-dihydrofolate + dTMP. The protein operates within pyrimidine metabolism; dTTP biosynthesis. Catalyzes the reductive methylation of 2'-deoxyuridine-5'-monophosphate (dUMP) to 2'-deoxythymidine-5'-monophosphate (dTMP) while utilizing 5,10-methylenetetrahydrofolate (mTHF) as the methyl donor and reductant in the reaction, yielding dihydrofolate (DHF) as a by-product. This enzymatic reaction provides an intracellular de novo source of dTMP, an essential precursor for DNA biosynthesis. In Bdellovibrio bacteriovorus (strain ATCC 15356 / DSM 50701 / NCIMB 9529 / HD100), this protein is Thymidylate synthase.